The primary structure comprises 192 residues: Protein GrpE (192 aa).

The tract at residues 1–41 is disordered; that stretch reads MSKEEFPHEKDLKDEVTPDKAPKKDPKAAPKEEVKENPVEN.

This sequence belongs to the GrpE family. Homodimer.

The protein localises to the cytoplasm. Functionally, participates actively in the response to hyperosmotic and heat shock by preventing the aggregation of stress-denatured proteins, in association with DnaK and GrpE. It is the nucleotide exchange factor for DnaK and may function as a thermosensor. Unfolded proteins bind initially to DnaJ; upon interaction with the DnaJ-bound protein, DnaK hydrolyzes its bound ATP, resulting in the formation of a stable complex. GrpE releases ADP from DnaK; ATP binding to DnaK triggers the release of the substrate protein, thus completing the reaction cycle. Several rounds of ATP-dependent interactions between DnaJ, DnaK and GrpE are required for fully efficient folding. This Lactobacillus johnsonii (strain CNCM I-12250 / La1 / NCC 533) protein is Protein GrpE.